The following is an 83-amino-acid chain: Sulfur carrier protein TusA (83 aa).

Catalysis depends on Cys19, which acts as the Cysteine persulfide intermediate.

It belongs to the sulfur carrier protein TusA family.

It localises to the cytoplasm. Its function is as follows. Sulfur carrier protein which probably makes part of a sulfur-relay system. In Vibrio atlanticus (strain LGP32) (Vibrio splendidus (strain Mel32)), this protein is Sulfur carrier protein TusA.